Here is a 210-residue protein sequence, read N- to C-terminus: Na(+)-translocating NADH-quinone reductase subunit D (210 aa).

A run of 5 helical transmembrane segments spans residues 42–62 (FVMTLAVTFVTALSNFFVSLI), 72–92 (IIVQMAIIASLVIVVDQILKA), 103–123 (VFVGLIITNCIVMGRAEAFAM), 131–151 (LIDGIGNGLGYGFVLITVGFF), and 178–198 (NGLMLLAPSAFFLIGFMIWAI).

It belongs to the NqrDE/RnfAE family. In terms of assembly, composed of six subunits; NqrA, NqrB, NqrC, NqrD, NqrE and NqrF.

Its subcellular location is the cell inner membrane. It catalyses the reaction a ubiquinone + n Na(+)(in) + NADH + H(+) = a ubiquinol + n Na(+)(out) + NAD(+). NQR complex catalyzes the reduction of ubiquinone-1 to ubiquinol by two successive reactions, coupled with the transport of Na(+) ions from the cytoplasm to the periplasm. NqrA to NqrE are probably involved in the second step, the conversion of ubisemiquinone to ubiquinol. This Vibrio vulnificus (strain CMCP6) protein is Na(+)-translocating NADH-quinone reductase subunit D.